Here is a 231-residue protein sequence, read N- to C-terminus: Flagellar L-ring protein (231 aa).

The signal sequence occupies residues 1–20 (MTYRRIPLYLSCLFLLALSG). The N-palmitoyl cysteine moiety is linked to residue cysteine 21. Residue cysteine 21 is the site of S-diacylglycerol cysteine attachment.

It belongs to the FlgH family. As to quaternary structure, the basal body constitutes a major portion of the flagellar organelle and consists of four rings (L,P,S, and M) mounted on a central rod.

The protein resides in the cell outer membrane. It is found in the bacterial flagellum basal body. Assembles around the rod to form the L-ring and probably protects the motor/basal body from shearing forces during rotation. The chain is Flagellar L-ring protein from Desulfotalea psychrophila (strain LSv54 / DSM 12343).